A 101-amino-acid polypeptide reads, in one-letter code: NADH-ubiquinone oxidoreductase chain 5 (101 aa).

3 helical membrane-spanning segments follow: residues 12 to 32, 48 to 68, and 79 to 99; these read IALF…SGVI, FLFI…FICF, and LVIY…LFII.

It belongs to the complex I subunit 5 family.

Its subcellular location is the mitochondrion inner membrane. It carries out the reaction a ubiquinone + NADH + 5 H(+)(in) = a ubiquinol + NAD(+) + 4 H(+)(out). Core subunit of the mitochondrial membrane respiratory chain NADH dehydrogenase (Complex I) that is believed to belong to the minimal assembly required for catalysis. Complex I functions in the transfer of electrons from NADH to the respiratory chain. The immediate electron acceptor for the enzyme is believed to be ubiquinone. In Leishmania tarentolae (Sauroleishmania tarentolae), this protein is NADH-ubiquinone oxidoreductase chain 5 (ND5).